A 61-amino-acid chain; its full sequence is UPF0181 protein KPN78578_22920 (61 aa).

This sequence belongs to the UPF0181 family.

The protein is UPF0181 protein KPN78578_22920 of Klebsiella pneumoniae subsp. pneumoniae (strain ATCC 700721 / MGH 78578).